The chain runs to 364 residues: E3 ubiquitin-protein ligase rnf146 (364 aa).

A disordered region spans residues 18–37; sequence KKVSGEAVPEGSGSPSSPSL. The span at 22-34 shows a compositional bias: low complexity; it reads GEAVPEGSGSPSS. The RING-type zinc finger occupies 42–80; the sequence is CPICLQSCVHPVRLPCRHIFCFLCVKGASWHSKRCALCR. The 77-residue stretch at 102-178 folds into the WWE domain; sequence SATGGCGTGS…EHGRRRRMKR (77 aa). Residues Tyr118, Arg121, Trp125, Tyr155, Gln164, Arg174, and Lys186 each coordinate a glycoprotein. Disordered regions lie at residues 217–262 and 279–364; these read AAAE…PASS and NEQE…VTKV. Acidic residues-rich tracts occupy residues 281 to 295 and 308 to 322; these read QEPE…DDSA and TSDD…DENE.

The protein resides in the cytoplasm. It is found in the cytosol. It localises to the nucleus. The catalysed reaction is S-ubiquitinyl-[E2 ubiquitin-conjugating enzyme]-L-cysteine + [acceptor protein]-L-lysine = [E2 ubiquitin-conjugating enzyme]-L-cysteine + N(6)-ubiquitinyl-[acceptor protein]-L-lysine.. It functions in the pathway protein modification; protein ubiquitination. E3 ubiquitin-protein ligase that specifically binds poly-ADP-ribosylated proteins and mediates their ubiquitination and subsequent degradation. May regulate many important biological processes, such as cell survival and DNA damage response. Acts as an activator of the Wnt signaling pathway by mediating the ubiquitination of poly-ADP-ribosylated proteins. Neuroprotective protein. Protects against cell death induced by DNA damaging agents and rescues cells from G1 arrest. Promotes cell survival after gamma-irradiation. Facilitates DNA repair. In Danio rerio (Zebrafish), this protein is E3 ubiquitin-protein ligase rnf146 (rnf146).